An 85-amino-acid polypeptide reads, in one-letter code: Large ribosomal subunit protein bL27 (85 aa).

This sequence belongs to the bacterial ribosomal protein bL27 family.

This is Large ribosomal subunit protein bL27 from Stutzerimonas stutzeri (strain A1501) (Pseudomonas stutzeri).